A 554-amino-acid chain; its full sequence is 3-(3-hydroxy-phenyl)propionate/3-hydroxycinnamic acid hydroxylase (554 aa).

FAD contacts are provided by residues 17–46 (QVAI…VVEK) and 285–295 (FRINRVLLAGD).

This sequence belongs to the PheA/TfdB FAD monooxygenase family. It depends on FAD as a cofactor.

The enzyme catalyses 3-(3-hydroxyphenyl)propanoate + NADH + O2 + H(+) = 3-(2,3-dihydroxyphenyl)propanoate + NAD(+) + H2O. It carries out the reaction (2E)-3-(3-hydroxyphenyl)prop-2-enoate + NADH + O2 + H(+) = (2E)-3-(2,3-dihydroxyphenyl)prop-2-enoate + NAD(+) + H2O. It participates in aromatic compound metabolism; 3-phenylpropanoate degradation. Catalyzes the insertion of one atom of molecular oxygen into position 2 of the phenyl ring of 3-(3-hydroxyphenyl)propionate (3-HPP) and hydroxycinnamic acid (3HCI). The sequence is that of 3-(3-hydroxy-phenyl)propionate/3-hydroxycinnamic acid hydroxylase from Klebsiella pneumoniae subsp. pneumoniae (strain ATCC 700721 / MGH 78578).